Here is a 313-residue protein sequence, read N- to C-terminus: Porphobilinogen deaminase (313 aa).

Cys-242 is modified (S-(dipyrrolylmethanemethyl)cysteine).

Belongs to the HMBS family. As to quaternary structure, monomer. The cofactor is dipyrromethane.

The catalysed reaction is 4 porphobilinogen + H2O = hydroxymethylbilane + 4 NH4(+). The protein operates within porphyrin-containing compound metabolism; protoporphyrin-IX biosynthesis; coproporphyrinogen-III from 5-aminolevulinate: step 2/4. In terms of biological role, tetrapolymerization of the monopyrrole PBG into the hydroxymethylbilane pre-uroporphyrinogen in several discrete steps. The sequence is that of Porphobilinogen deaminase (hemC) from Proteus mirabilis.